A 455-amino-acid polypeptide reads, in one-letter code: Deoxyribodipyrimidine photo-lyase (455 aa).

A Photolyase/cryptochrome alpha/beta domain is found at 2–131; sequence SVAVVLFTSD…ELHVHDAVVT (130 aa). FAD-binding positions include tyrosine 219 and 231–235; that span reads TSRLS. Interaction with DNA stretches follow at residues 266 to 273 and 330 to 331; these read QLAWRDFH and NR. 361-363 serves as a coordination point for FAD; the sequence is DGD. Glutamine 392 is a DNA binding site.

This sequence belongs to the DNA photolyase class-1 family. As to quaternary structure, monomer. The cofactor is FAD. Coenzyme F420-(gamma-Glu)n serves as cofactor.

It catalyses the reaction cyclobutadipyrimidine (in DNA) = 2 pyrimidine residues (in DNA).. In terms of biological role, involved in repair of UV radiation-induced DNA damage. Catalyzes the light-dependent monomerization (300-600 nm) of cyclobutyl pyrimidine dimers (in cis-syn configuration), which are formed between adjacent bases on the same DNA strand upon exposure to ultraviolet radiation. This chain is Deoxyribodipyrimidine photo-lyase (phr), found in Streptomyces griseus.